Here is a 188-residue protein sequence, read N- to C-terminus: Adenine phosphoribosyltransferase (188 aa).

The protein belongs to the purine/pyrimidine phosphoribosyltransferase family. In terms of assembly, homodimer.

Its subcellular location is the cytoplasm. The catalysed reaction is AMP + diphosphate = 5-phospho-alpha-D-ribose 1-diphosphate + adenine. It functions in the pathway purine metabolism; AMP biosynthesis via salvage pathway; AMP from adenine: step 1/1. Catalyzes a salvage reaction resulting in the formation of AMP, that is energically less costly than de novo synthesis. In Frankia casuarinae (strain DSM 45818 / CECT 9043 / HFP020203 / CcI3), this protein is Adenine phosphoribosyltransferase.